The chain runs to 398 residues: Succinate--CoA ligase [ADP-forming] subunit beta (398 aa).

The ATP-grasp domain occupies 9 to 254 (KALLKSYGAP…TTEEDEKEIE (246 aa)). Residues lysine 46, 53–55 (GRG), glutamate 109, alanine 112, and glutamate 117 contribute to the ATP site. Mg(2+) contacts are provided by asparagine 209 and aspartate 223. Substrate contacts are provided by residues asparagine 274 and 331-333 (GIM).

Belongs to the succinate/malate CoA ligase beta subunit family. Heterotetramer of two alpha and two beta subunits. Mg(2+) is required as a cofactor.

It carries out the reaction succinate + ATP + CoA = succinyl-CoA + ADP + phosphate. The catalysed reaction is GTP + succinate + CoA = succinyl-CoA + GDP + phosphate. It participates in carbohydrate metabolism; tricarboxylic acid cycle; succinate from succinyl-CoA (ligase route): step 1/1. Succinyl-CoA synthetase functions in the citric acid cycle (TCA), coupling the hydrolysis of succinyl-CoA to the synthesis of either ATP or GTP and thus represents the only step of substrate-level phosphorylation in the TCA. The beta subunit provides nucleotide specificity of the enzyme and binds the substrate succinate, while the binding sites for coenzyme A and phosphate are found in the alpha subunit. This chain is Succinate--CoA ligase [ADP-forming] subunit beta, found in Sinorhizobium medicae (strain WSM419) (Ensifer medicae).